Reading from the N-terminus, the 295-residue chain is ATP synthase subunit a (295 aa).

The next 7 membrane-spanning stretches (helical) occupy residues 41-61 (KWSA…WLGF), 101-121 (YLTI…IPVA), 129-149 (IALP…VGIR), 161-181 (LVPA…IEFV), 191-211 (LAIR…VFAL), 222-242 (FVFG…ELMI), and 244-264 (VLQA…AISS).

It belongs to the ATPase A chain family. As to quaternary structure, F-type ATPases have 2 components, CF(1) - the catalytic core - and CF(0) - the membrane proton channel. CF(1) has five subunits: alpha(3), beta(3), gamma(1), delta(1), epsilon(1). CF(0) has three main subunits: a(1), b(2) and c(9-12). The alpha and beta chains form an alternating ring which encloses part of the gamma chain. CF(1) is attached to CF(0) by a central stalk formed by the gamma and epsilon chains, while a peripheral stalk is formed by the delta and b chains.

It is found in the cell membrane. In terms of biological role, key component of the proton channel; it plays a direct role in the translocation of protons across the membrane. The polypeptide is ATP synthase subunit a (Parafrankia sp. (strain EAN1pec)).